Here is a 245-residue protein sequence, read N- to C-terminus: Carbohydrate deacetylase (245 aa).

Histidine 59 and histidine 125 together coordinate Mg(2+).

It belongs to the YdjC deacetylase family. As to quaternary structure, homodimer. Mg(2+) serves as cofactor.

In terms of biological role, probably catalyzes the deacetylation of acetylated carbohydrates an important step in the degradation of oligosaccharides. The protein is Carbohydrate deacetylase of Listeria monocytogenes serotype 4a (strain HCC23).